A 180-amino-acid chain; its full sequence is Inner membrane-spanning protein YciB (180 aa).

5 helical membrane-spanning segments follow: residues 25 to 45 (QNATLYMLITSIICITLCYII), 49 to 69 (VSKLSIISSTVLFISGIITLI), 76 to 96 (IKIKPTILYVIFGIIFLMSGI), 118 to 138 (IILSYRTAAFFFFMAVVNEVV), and 150 to 170 (FKVFGVIPITFIFILLQLPLL).

The protein belongs to the YciB family.

Its subcellular location is the cell inner membrane. Functionally, plays a role in cell envelope biogenesis, maintenance of cell envelope integrity and membrane homeostasis. This is Inner membrane-spanning protein YciB from Rickettsia prowazekii (strain Madrid E).